The following is a 244-amino-acid chain: tRNA1(Val) (adenine(37)-N6)-methyltransferase (244 aa).

Belongs to the methyltransferase superfamily. tRNA (adenine-N(6)-)-methyltransferase family.

It is found in the cytoplasm. It carries out the reaction adenosine(37) in tRNA1(Val) + S-adenosyl-L-methionine = N(6)-methyladenosine(37) in tRNA1(Val) + S-adenosyl-L-homocysteine + H(+). Its function is as follows. Specifically methylates the adenine in position 37 of tRNA(1)(Val) (anticodon cmo5UAC). This Shewanella sediminis (strain HAW-EB3) protein is tRNA1(Val) (adenine(37)-N6)-methyltransferase.